The primary structure comprises 331 residues: B-box zinc finger protein 21 (331 aa).

Zn(2+) is bound by residues cysteine 5, cysteine 8, cysteine 28, histidine 34, cysteine 60, cysteine 63, cysteine 83, and histidine 93. The B box-type 1; atypical zinc finger occupies 5–47 (CDVCDKEEASVFCTADEASLCGGCDHQVHHANKLASKHLRFSL). The B box-type 2; atypical zinc finger occupies 60–102 (CDICQDKKALLFCQQDRAILCKDCDSSIHAANEHTKKHDRFLL). Composition is skewed to low complexity over residues 115–126 (KPTSKSSSSSSS) and 228–238 (NNNNNNNNNNN). Disordered regions lie at residues 115–167 (KPTS…GGDA) and 209–241 (DDDG…NTVS).

In terms of assembly, interacts with COP1, HY5 and BBX32. Interacts with FLZ1.

The protein resides in the nucleus. Functionally, transcription activator that acts as a positive regulator of seedling photomorphogenesis. Acts downstream of COP1 and play an important role in early and long-term adjustment of the shade avoidance syndrome (SAS) responses in natural environments. The chain is B-box zinc finger protein 21 from Arabidopsis thaliana (Mouse-ear cress).